Here is a 257-residue protein sequence, read N- to C-terminus: Flavin-dependent thymidylate synthase (257 aa).

Residues 1–202 (MNVKLVSYTR…PRLFRYVGPN (202 aa)) enclose the ThyX domain. FAD-binding positions include serine 55, 79 to 81 (RHR), and glutamine 87. Residues 76 to 79 (QLVR), 87 to 91 (QMSHR), and arginine 141 contribute to the dUMP site. The short motif at 79–89 (RHRVASYTQMS) is the ThyX motif element. Residues 157–159 (NAR) and asparagine 163 each bind FAD. DUMP is bound at residue arginine 168. Arginine 168 (involved in ionization of N3 of dUMP, leading to its activation) is an active-site residue.

The protein belongs to the thymidylate synthase ThyX family. Homotetramer. Requires FAD as cofactor.

It catalyses the reaction dUMP + (6R)-5,10-methylene-5,6,7,8-tetrahydrofolate + NADPH + H(+) = dTMP + (6S)-5,6,7,8-tetrahydrofolate + NADP(+). The protein operates within pyrimidine metabolism; dTTP biosynthesis. Functionally, catalyzes the reductive methylation of 2'-deoxyuridine-5'-monophosphate (dUMP) to 2'-deoxythymidine-5'-monophosphate (dTMP) while utilizing 5,10-methylenetetrahydrofolate (mTHF) as the methyl donor, and NADPH and FADH(2) as the reductant. The polypeptide is Flavin-dependent thymidylate synthase (Sulfurisphaera tokodaii (strain DSM 16993 / JCM 10545 / NBRC 100140 / 7) (Sulfolobus tokodaii)).